The chain runs to 506 residues: Cytochrome P450 71B8 (506 aa).

The chain crosses the membrane as a helical span at residues 5-25 (ILLCFFFLFPLLLTLFKKLLP). Cys-443 provides a ligand contact to heme.

This sequence belongs to the cytochrome P450 family. Heme serves as cofactor.

The protein resides in the membrane. The protein is Cytochrome P450 71B8 (CYP71B8) of Arabidopsis thaliana (Mouse-ear cress).